A 393-amino-acid chain; its full sequence is MTAPTTRKDLMIVNMGPQHPSMHGVLRLIVTLDGEDVVDCEPILGYLHRGMEKIAENRTIIQYLPYVTRWDYLATMFTEAITINGPEQLGNIQVPKRASYIRVIMLELSRIASHLLWLGPFMADIGAQTPFFYIFRERELIYDLFEAATGMRMMHNYFRIGGVAADLPYGWIDKCLDFCDYFLTGVAEYQKLITRNPIFLERVEGVGIIGRDEAVNWGLSGPMLRASGIEWDLRKVDHYESYDEFDWQVQWQREGDSLARYLVRIGEMTESIKIIQQALEGIPGGPYENLEMRRFDRLKDPEWNDFEYRFISKKPSPTFELSKQELYVRVEAPKGELGIFLIGDQSVFPWRWKIRPPGFINLQILPQLVKRMKLADIMTILGSIDIIMGEVDR.

Belongs to the complex I 49 kDa subunit family. As to quaternary structure, NDH is composed of at least 16 different subunits, 5 of which are encoded in the nucleus.

The protein localises to the plastid. Its subcellular location is the chloroplast thylakoid membrane. The catalysed reaction is a plastoquinone + NADH + (n+1) H(+)(in) = a plastoquinol + NAD(+) + n H(+)(out). The enzyme catalyses a plastoquinone + NADPH + (n+1) H(+)(in) = a plastoquinol + NADP(+) + n H(+)(out). In terms of biological role, NDH shuttles electrons from NAD(P)H:plastoquinone, via FMN and iron-sulfur (Fe-S) centers, to quinones in the photosynthetic chain and possibly in a chloroplast respiratory chain. The immediate electron acceptor for the enzyme in this species is believed to be plastoquinone. Couples the redox reaction to proton translocation, and thus conserves the redox energy in a proton gradient. The sequence is that of NAD(P)H-quinone oxidoreductase subunit H, chloroplastic from Solanum tuberosum (Potato).